A 440-amino-acid chain; its full sequence is uncharacterized protein (440 aa).

This is an uncharacterized protein from Saccharolobus islandicus (Sulfolobus islandicus).